The following is a 187-amino-acid chain: uncharacterized protein (187 aa).

The Nudix hydrolase domain occupies 26–157 (NRHAAVLLPI…YLDVSRRGQQ (132 aa)). The short motif at 64-86 (GVADPKDKSIIATALREAEEEVN) is the Nudix box element. Residues glutamate 80 and glutamate 84 each coordinate Mg(2+).

The protein belongs to the Nudix hydrolase family. PCD1 subfamily. It depends on Mn(2+) as a cofactor. Mg(2+) is required as a cofactor.

Its function is as follows. Probably mediates the hydrolysis of some nucleoside diphosphate derivatives. This is an uncharacterized protein from Photorhabdus laumondii subsp. laumondii (strain DSM 15139 / CIP 105565 / TT01) (Photorhabdus luminescens subsp. laumondii).